Here is a 137-residue protein sequence, read N- to C-terminus: Nucleoside diphosphate kinase (137 aa).

Lys-9, Phe-57, Arg-85, Thr-91, Arg-102, and Asn-112 together coordinate ATP. Catalysis depends on His-115, which acts as the Pros-phosphohistidine intermediate.

The protein belongs to the NDK family. As to quaternary structure, homotetramer. Mg(2+) is required as a cofactor.

The protein localises to the cytoplasm. It carries out the reaction a 2'-deoxyribonucleoside 5'-diphosphate + ATP = a 2'-deoxyribonucleoside 5'-triphosphate + ADP. The catalysed reaction is a ribonucleoside 5'-diphosphate + ATP = a ribonucleoside 5'-triphosphate + ADP. Major role in the synthesis of nucleoside triphosphates other than ATP. The ATP gamma phosphate is transferred to the NDP beta phosphate via a ping-pong mechanism, using a phosphorylated active-site intermediate. In Campylobacter jejuni subsp. jejuni serotype O:6 (strain 81116 / NCTC 11828), this protein is Nucleoside diphosphate kinase.